The sequence spans 142 residues: FAD synthase (142 aa).

Residues 9–10, 14–17, and D92 each bind ATP; these read TF and HPGH.

It belongs to the archaeal FAD synthase family. As to quaternary structure, homodimer. A divalent metal cation is required as a cofactor.

The enzyme catalyses FMN + ATP + H(+) = FAD + diphosphate. It participates in cofactor biosynthesis; FAD biosynthesis; FAD from FMN: step 1/1. Catalyzes the transfer of the AMP portion of ATP to flavin mononucleotide (FMN) to produce flavin adenine dinucleotide (FAD) coenzyme. The polypeptide is FAD synthase (Haloferax volcanii (strain ATCC 29605 / DSM 3757 / JCM 8879 / NBRC 14742 / NCIMB 2012 / VKM B-1768 / DS2) (Halobacterium volcanii)).